We begin with the raw amino-acid sequence, 145 residues long: Transcriptional regulator MraZ (145 aa).

2 SpoVT-AbrB domains span residues 5 to 47 (EHQH…PLPE) and 76 to 119 (AVEC…AKDQ).

It belongs to the MraZ family. Forms oligomers.

The protein localises to the cytoplasm. It is found in the nucleoid. This Pelotomaculum thermopropionicum (strain DSM 13744 / JCM 10971 / SI) protein is Transcriptional regulator MraZ.